We begin with the raw amino-acid sequence, 497 residues long: uncharacterized protein (497 aa).

Positions 58–79 (ISTRSFRNDGNDSDPQTLDPDA) are disordered. 12 helical membrane-spanning segments follow: residues 86-106 (IAFV…ALPI), 120-140 (FSGL…YPML), 155-175 (FRPL…YSLA), 180-200 (WLYL…MFLY), 222-242 (LNIL…GLLA), 258-278 (VGSW…SIFF), 309-329 (FMLV…AGYQ), 348-368 (GNFL…STFL), 378-398 (MLYG…LDVL), 407-427 (FVLY…LISL), 438-458 (ILVG…GAIC), and 468-488 (VGFI…LLFL).

It belongs to the major facilitator superfamily.

It localises to the membrane. This is an uncharacterized protein from Schizosaccharomyces pombe (strain 972 / ATCC 24843) (Fission yeast).